Here is a 937-residue protein sequence, read N- to C-terminus: Translation initiation factor IF-2 (937 aa).

Residues 47 to 352 (RAAFQTKATP…EMPQRKERPL (306 aa)) are disordered. Positions 52–68 (TKATPAASKPATPAAPK) are enriched in low complexity. Polar residues predominate over residues 97 to 116 (QHSNNRPQANANRNGQASNG). The segment covering 117-153 (QNRTNNARPNNNSARPNNSRPNTNSRPNNNSQNRSTS) has biased composition (low complexity). The span at 154-169 (ANHPMSLQEQISQANA) shows a compositional bias: polar residues. Residues 173–197 (RTQERIQQQREQREADEKKRREQAN) are compositionally biased toward basic and acidic residues. Polar residues predominate over residues 202-229 (TRNNASNNRPSNGKPTNGARPTTNSPRP). Low complexity predominate over residues 240–269 (SSRPNNNNSARPNTTNNRPTNSRPATTPSR). The segment covering 274–298 (QEMQQKMQANTVSASKPASNNTASK) has biased composition (polar residues). Residues 322–331 (FNKKRKKTRK) show a composition bias toward basic residues. The span at 339 to 352 (AAKKEMPQRKERPL) shows a compositional bias: basic and acidic residues. The region spanning 438 to 607 (SRPPVVTIMG…LLEADVLELK (170 aa)) is the tr-type G domain. A G1 region spans residues 447–454 (GHVDHGKT). 447 to 454 (GHVDHGKT) is a binding site for GTP. Residues 472–476 (GITQH) are G2. The tract at residues 493 to 496 (DTPG) is G3. GTP-binding positions include 493 to 497 (DTPGH) and 547 to 550 (NKID). The segment at 547 to 550 (NKID) is G4. Positions 583–585 (SAK) are G5.

Belongs to the TRAFAC class translation factor GTPase superfamily. Classic translation factor GTPase family. IF-2 subfamily.

It localises to the cytoplasm. Functionally, one of the essential components for the initiation of protein synthesis. Protects formylmethionyl-tRNA from spontaneous hydrolysis and promotes its binding to the 30S ribosomal subunits. Also involved in the hydrolysis of GTP during the formation of the 70S ribosomal complex. This is Translation initiation factor IF-2 from Latilactobacillus sakei subsp. sakei (strain 23K) (Lactobacillus sakei subsp. sakei).